The chain runs to 387 residues: Small ribosomal subunit biogenesis GTPase RsgA (387 aa).

One can recognise a CP-type G domain in the interval 112–273; that stretch reads YDGLKPVAAN…LIDSPGVREF (162 aa). GTP contacts are provided by residues 159–162 and 213–221; these read NKID and GQSGVGKSS. Residues Cys297, Cys302, His304, and Cys310 each coordinate Zn(2+).

The protein belongs to the TRAFAC class YlqF/YawG GTPase family. RsgA subfamily. In terms of assembly, monomer. Associates with 30S ribosomal subunit, binds 16S rRNA. Requires Zn(2+) as cofactor.

Its subcellular location is the cytoplasm. In terms of biological role, one of several proteins that assist in the late maturation steps of the functional core of the 30S ribosomal subunit. Helps release RbfA from mature subunits. May play a role in the assembly of ribosomal proteins into the subunit. Circularly permuted GTPase that catalyzes slow GTP hydrolysis, GTPase activity is stimulated by the 30S ribosomal subunit. In Vibrio cholerae serotype O1 (strain ATCC 39315 / El Tor Inaba N16961), this protein is Small ribosomal subunit biogenesis GTPase RsgA.